Consider the following 154-residue polypeptide: RxLR effector protein PexRD24 (154 aa).

Residues 1–22 form the signal peptide; that stretch reads MHSSLLWLGAVVALLAVNNVTA. A RxLR-dEER motif is present at residues 53-67; that stretch reads RSLRAVETSEDEEER. A short sequence motif (PP1c-binding motif) is located at residue Lys138.

The protein belongs to the RxLR effector family. In terms of assembly, interacts with the potato PP1c family proteins PP1c-1, PP1c-2 and PP1c-3.

The protein resides in the secreted. It is found in the host nucleus. Its subcellular location is the host nucleoplasm. The protein localises to the host nucleolus. Functionally, effector that interacts with isoforms of host protein phosphatase type 1c (PP1c), mimicking a regulatory subunit and causing their re-localization within the host nucleus. The holoenzymes formed with PP1c isoforms act to promote late blight by attenuating jasmonic acid (JA)- and salicylic acid (SA)-mediated transcriptional responses of the host plant. The protein is RxLR effector protein PexRD24 of Phytophthora infestans (strain T30-4) (Potato late blight agent).